The chain runs to 327 residues: MARLSPLHLRVQCAIRQQQLLHPGQRLLVAFSGGQDSFCLLQILRDLQPRWGWQIFVLHCDHRWSADETECARFLQGWLQQQGLPHAVETADPIRRDEAGARAWRYQQLEKWARTWDCSAVVMGHTASDRAETFLWNLLRGTGAAGLSSLDWQRHLDDRDPTSAQVVRPLLGLYRWETEQFCQQHQLPVWPDRSNQDLAHGRNRLRLEVMPYLKQHFNPQLEAALNRAATLLQAEHELVVAQAAQLWPQVYEPALPGLRRDPLRAAPLALQRQVMFQFLSLVLPHHPTFEQVEAGIQLLKADRGSRSPDYPGGHWLEVKGDHLVCFH.

32–37 (SGGQDS) is an ATP binding site.

The protein belongs to the tRNA(Ile)-lysidine synthase family.

Its subcellular location is the cytoplasm. The catalysed reaction is cytidine(34) in tRNA(Ile2) + L-lysine + ATP = lysidine(34) in tRNA(Ile2) + AMP + diphosphate + H(+). Functionally, ligates lysine onto the cytidine present at position 34 of the AUA codon-specific tRNA(Ile) that contains the anticodon CAU, in an ATP-dependent manner. Cytidine is converted to lysidine, thus changing the amino acid specificity of the tRNA from methionine to isoleucine. This chain is tRNA(Ile)-lysidine synthase, found in Synechococcus sp. (strain JA-2-3B'a(2-13)) (Cyanobacteria bacterium Yellowstone B-Prime).